The chain runs to 359 residues: Peptide chain release factor 1 (359 aa).

Glutamine 236 carries the post-translational modification N5-methylglutamine.

This sequence belongs to the prokaryotic/mitochondrial release factor family. Methylated by PrmC. Methylation increases the termination efficiency of RF1.

Its subcellular location is the cytoplasm. Its function is as follows. Peptide chain release factor 1 directs the termination of translation in response to the peptide chain termination codons UAG and UAA. The chain is Peptide chain release factor 1 from Streptococcus pneumoniae (strain Taiwan19F-14).